Consider the following 275-residue polypeptide: Glucan endo-1,3-beta-glucosidase, acidic isoform PR-N (275 aa).

Glu196 acts as the Nucleophile in catalysis.

The protein belongs to the glycosyl hydrolase 17 family. Post-translationally, the N-terminus is blocked.

The protein resides in the secreted. Its subcellular location is the extracellular space. The enzyme catalyses Hydrolysis of (1-&gt;3)-beta-D-glucosidic linkages in (1-&gt;3)-beta-D-glucans.. Its function is as follows. Implicated in the defense of plants against pathogens. The polypeptide is Glucan endo-1,3-beta-glucosidase, acidic isoform PR-N (PRN) (Nicotiana tabacum (Common tobacco)).